The following is a 105-amino-acid chain: Large ribosomal subunit protein uL24 (105 aa).

Residues Arg-40–Thr-61 are disordered.

The protein belongs to the universal ribosomal protein uL24 family. Part of the 50S ribosomal subunit.

In terms of biological role, one of two assembly initiator proteins, it binds directly to the 5'-end of the 23S rRNA, where it nucleates assembly of the 50S subunit. One of the proteins that surrounds the polypeptide exit tunnel on the outside of the subunit. This is Large ribosomal subunit protein uL24 from Mycobacteroides abscessus (strain ATCC 19977 / DSM 44196 / CCUG 20993 / CIP 104536 / JCM 13569 / NCTC 13031 / TMC 1543 / L948) (Mycobacterium abscessus).